A 507-amino-acid chain; its full sequence is Light-independent protochlorophyllide reductase subunit B (507 aa).

Residue aspartate 36 coordinates [4Fe-4S] cluster. Residue aspartate 293 is the Proton donor of the active site. 428–429 (GM) provides a ligand contact to substrate.

Belongs to the ChlB/BchB/BchZ family. Protochlorophyllide reductase is composed of three subunits; ChlL, ChlN and ChlB. Forms a heterotetramer of two ChlB and two ChlN subunits. Requires [4Fe-4S] cluster as cofactor.

It localises to the plastid. The protein localises to the chloroplast. The enzyme catalyses chlorophyllide a + oxidized 2[4Fe-4S]-[ferredoxin] + 2 ADP + 2 phosphate = protochlorophyllide a + reduced 2[4Fe-4S]-[ferredoxin] + 2 ATP + 2 H2O. Its pathway is porphyrin-containing compound metabolism; chlorophyll biosynthesis (light-independent). In terms of biological role, component of the dark-operative protochlorophyllide reductase (DPOR) that uses Mg-ATP and reduced ferredoxin to reduce ring D of protochlorophyllide (Pchlide) to form chlorophyllide a (Chlide). This reaction is light-independent. The NB-protein (ChlN-ChlB) is the catalytic component of the complex. In Porphyra purpurea (Red seaweed), this protein is Light-independent protochlorophyllide reductase subunit B.